Consider the following 195-residue polypeptide: Acireductone dioxygenase 2 (195 aa).

Fe(2+)-binding residues include His-94, His-96, Glu-100, and His-139. 4 residues coordinate Ni(2+): His-94, His-96, Glu-100, and His-139.

Belongs to the acireductone dioxygenase (ARD) family. Fe(2+) serves as cofactor. The cofactor is Ni(2+).

It localises to the cytoplasm. The protein resides in the nucleus. It catalyses the reaction 1,2-dihydroxy-5-(methylsulfanyl)pent-1-en-3-one + O2 = 4-methylsulfanyl-2-oxobutanoate + formate + 2 H(+). It carries out the reaction 1,2-dihydroxy-5-(methylsulfanyl)pent-1-en-3-one + O2 = 3-(methylsulfanyl)propanoate + CO + formate + 2 H(+). It participates in amino-acid biosynthesis; L-methionine biosynthesis via salvage pathway; L-methionine from S-methyl-5-thio-alpha-D-ribose 1-phosphate: step 5/6. Catalyzes 2 different reactions between oxygen and the acireductone 1,2-dihydroxy-3-keto-5-methylthiopentene (DHK-MTPene) depending upon the metal bound in the active site. Fe-containing acireductone dioxygenase (Fe-ARD) produces formate and 2-keto-4-methylthiobutyrate (KMTB), the alpha-ketoacid precursor of methionine in the methionine recycle pathway. Ni-containing acireductone dioxygenase (Ni-ARD) produces methylthiopropionate, carbon monoxide and formate, and does not lie on the methionine recycle pathway. The protein is Acireductone dioxygenase 2 of Physcomitrium patens (Spreading-leaved earth moss).